The primary structure comprises 191 residues: Protein Ves (191 aa).

This sequence belongs to the Ves family.

This is Protein Ves from Escherichia coli (strain UTI89 / UPEC).